The chain runs to 777 residues: Phosphate transporter PHO1 homolog 10 (777 aa).

An SPX domain is found at 1 to 322; the sequence is MKFGKIFKKQ…SRNASRNYMK (322 aa). Topologically, residues 1–372 are cytoplasmic; sequence MKFGKIFKKQ…RPKVKRERHR (372 aa). A helical transmembrane segment spans residues 373–393; that stretch reads VTFFSGFFSGCSIALVIAVVF. Residues 394–408 lie on the Extracellular side of the membrane; sequence KIESRKIMEKNYGTE. The helical transmembrane segment at 409–429 threads the bilayer; that stretch reads YMANIIPLYSLFGFIILHMLM. The Cytoplasmic segment spans residues 430 to 459; it reads YSANIYFWKRYRVNYTFIFGFKQGTELGDR. The helical transmembrane segment at 460–480 threads the bilayer; that stretch reads EVFLVSTGLAVLAFVCFLLNL. Over 481–496 the chain is Extracellular; sequence QLDMDWRMKHHKTLPE. A helical transmembrane segment spans residues 497-517; the sequence is VIPLCLATIVLFILFCPFNII. Residues 518 to 646 are Cytoplasmic-facing; it reads YRSSRFFFIR…YELKKGRTWM (129 aa). The EXS domain maps to 581–775; that stretch reads HSHGVYNAFY…HYYDDDDVDK (195 aa). The chain crosses the membrane as a helical span at residues 647 to 667; it reads ILALVSSGVATGMNTFWDIVI. The Extracellular segment spans residues 668 to 691; it reads DWGLLRKHSKNPYLRDKLLVPHKS. The chain crosses the membrane as a helical span at residues 692 to 712; the sequence is VYFAAMVVNVILRVAWMQLVL. Topologically, residues 713-777 are cytoplasmic; it reads EFNLKSLHKI…YDDDDVDKDD (65 aa).

It belongs to the SYG1 (TC 2.A.94) family. In terms of tissue distribution, expressed in root epidermis and cortex, leaf blades and hydathodes, stems and flowers.

The protein localises to the cell membrane. Functionally, may transport inorganic phosphate (Pi). The chain is Phosphate transporter PHO1 homolog 10 (PHO1-H10) from Arabidopsis thaliana (Mouse-ear cress).